The following is a 113-amino-acid chain: Hydrogenase maturation factor HypA (113 aa).

Position 2 (His-2) interacts with Ni(2+). Residues Cys-73, Cys-76, Cys-89, and Cys-92 each coordinate Zn(2+).

It belongs to the HypA/HybF family.

In terms of biological role, involved in the maturation of [NiFe] hydrogenases. Required for nickel insertion into the metal center of the hydrogenase. The sequence is that of Hydrogenase maturation factor HypA from Paracoccus denitrificans (strain Pd 1222).